Here is a 617-residue protein sequence, read N- to C-terminus: uncharacterized protein (617 aa).

Polar residues predominate over residues 387–396 (NGGMSATQLP). 2 disordered regions span residues 387-419 (NGGM…HAAP) and 443-599 (YDDF…NNEQ). Positions 404–414 (RQAAANQFQQR) are enriched in low complexity. Residues 453-474 (QPLTQQQKDAARQRYQSASPEQ) show a composition bias toward polar residues. Composition is skewed to basic and acidic residues over residues 490 to 499 (QRREAARERI) and 522 to 531 (QRRDAARERI). Residues 549–570 (RPLNQQQRDNARQRVQSASPEQ) are compositionally biased toward polar residues. A compositionally biased stretch (basic and acidic residues) spans 572–585 (QVFREKVQESRPQR). A compositionally biased stretch (polar residues) spans 586–599 (LNDSNHTVRLNNEQ).

This is an uncharacterized protein from Escherichia coli (strain K12).